The following is a 574-amino-acid chain: FAD-linked oxidoreductase sor8 (574 aa).

A signal peptide spans 1–27; it reads MYAPPFVRAFGIAVLAVLPSFSSPATA. N58, N112, N136, N266, N312, N363, and N384 each carry an N-linked (GlcNAc...) asparagine glycan. The region spanning 126–305 is the FAD-binding PCMH-type domain; that stretch reads VIGTYVQYAV…YSMTVKAHAN (180 aa).

This sequence belongs to the oxygen-dependent FAD-linked oxidoreductase family. It depends on FAD as a cofactor.

The protein operates within secondary metabolite biosynthesis. FAD-linked oxidoreductase; part of the SOR gene cluster that mediates the biosynthesis of sorbicillinoids, a diverse group of yellow secondary metabolites that restrict growth of competing pathogenic fungi but not of bacteria. Sorbicillinoids biosynthesis requires the action of two PKSs. The SOR cluster is required for the production of trichodimerol and dihydrotrichotetronin, with sor2 being sufficient for production of trichodimerol, but not dihydrotrichotetronin in the light. Sor1 iteratively combines three acetyl units and the growing chain is modified by the ketoacyl reductase subunit, and optional by the enoyl reductase subunit in the second cycle. The polyketide is then handed over to the PKS sor2, which adds three more acetyl units, and two methyl groups. Sor2 releases an aldehyde, which undergoes spontaneous cyclization resulting in the formation of sorbicillin or 2',3'-dihydrosorbicillin. The monooxygenase sor5 oxidizes sorbicillin and 2',3'-dihydrosorbicillin to 2',3'-dihydrosorbicillinol and sorbicillinol, respectively. The oxidoreductase sor8 further converts sorbicillinol into oxosorbicillinol. Sorbicillinol is the building block for the other sorbicillinoids such as disorbicillinol, bisvertinolon, dihydrobisvertinolone, and dihydrotrichotetronine. This Hypocrea jecorina (strain QM6a) (Trichoderma reesei) protein is FAD-linked oxidoreductase sor8.